Consider the following 574-residue polypeptide: MRPDSLVMAAPEGSLRKRKVGGAEHSPASQPSLARDPADSPARLHTGTFWLTRIVLLRALAFIYFVAFLVAFNQNKALIGDRGLLPCKLYLKNVQEYFQGSTGWAAWTYAPTIMWLLDWSDMNFNLDLIALLGLGISSFVLVTGCANMILMTALWALYMSLVNVGQIWYSFGWESQLLETGFLGIFLSPLWTLSRLPKNTPTSQIVLWGFRWLIFRIMLGAGLIKVRGDKCWLDLTCMDFHYETQPVPNPIAYYLHRSPWWFHRFETLSNHFVELLVPFFLFLGRRMRILHGVLQILFQVILIISGNLSFLNWLTIVPSLACFDDAALGFLFPSGPQGLKKQVLEIQREDTQRVQPKPRDRGCLVRQVVNISLGILVAWLSVPVVINLLSSRQIMNTSFNPLRIVNTYGAFGSVTKERTEVILQGTVSPNASAPDAVWEDYEFKCKPGDPWRQPCLISPYHYRLDWLMWFAAFQTYEQNEWILHLAGKLLAGDSEALALLAVNPFEGRTPPRWIRGEHYRYKFSLPGGQHATQGKWWIRKRIGPYFPPLRLEDLKEYFKTREWPLPEPPSRHTR.

The interval 1 to 39 (MRPDSLVMAAPEGSLRKRKVGGAEHSPASQPSLARDPAD) is disordered. Over 1-49 (MRPDSLVMAAPEGSLRKRKVGGAEHSPASQPSLARDPADSPARLHTGTF) the chain is Cytoplasmic. A helical transmembrane segment spans residues 50 to 72 (WLTRIVLLRALAFIYFVAFLVAF). Over 73–127 (NQNKALIGDRGLLPCKLYLKNVQEYFQGSTGWAAWTYAPTIMWLLDWSDMNFNLD) the chain is Lumenal. The chain crosses the membrane as a helical span at residues 128 to 151 (LIALLGLGISSFVLVTGCANMILM). The Cytoplasmic segment spans residues 152-207 (TALWALYMSLVNVGQIWYSFGWESQLLETGFLGIFLSPLWTLSRLPKNTPTSQIVL). The chain crosses the membrane as a helical span at residues 208–221 (WGFRWLIFRIMLGA). Residues 222 to 292 (GLIKVRGDKC…LGRRMRILHG (71 aa)) lie on the Lumenal side of the membrane. A helical transmembrane segment spans residues 293 to 321 (VLQILFQVILIISGNLSFLNWLTIVPSLA). At 322 to 367 (CFDDAALGFLFPSGPQGLKKQVLEIQREDTQRVQPKPRDRGCLVRQ) the chain is on the cytoplasmic side. A helical membrane pass occupies residues 368–388 (VVNISLGILVAWLSVPVVINL). Residues 389-574 (LSSRQIMNTS…LPEPPSRHTR (186 aa)) lie on the Lumenal side of the membrane.

It belongs to the lipase maturation factor family. Interacts with LPL and SEL1L. In terms of tissue distribution, expressed in all tissues synthesizing lipoprotein lipase (Lpl) and hepatic lipase (Lipc), including adipose tissue, skeletal muscle, heart, and liver. Expressed at higher levels in tissues that express little or no lipase activity such as testis and pancreas suggesting additional functions in these tissues.

Its subcellular location is the endoplasmic reticulum membrane. Involved in the maturation of specific proteins in the endoplasmic reticulum. Required for maturation and transport of active lipoprotein lipase (LPL) through the secretory pathway. Each LMF1 molecule chaperones 50 or more molecules of LPL. The protein is Lipase maturation factor 1 (Lmf1) of Mus musculus (Mouse).